The chain runs to 1037 residues: MERARRLAYRGIVKRLVNDTKRHRNAETPHLVPHAPARYVSSLSPFISTPRSVNHTAAFGRHQQTRSISVDAVKPSDTFPRRHNSATPDEQTHMAKFCGFDHIDSLIDATVPKSIRLDSMKFSKFDAGLTESQMIQHMVDLASKNKVFKSFIGMGYYNTHVPTVILRNIMENPAWYTQYTPYQAEISQGRLESLLNFQTVITDLTGLPMSNASLLDEGTAAAEAMAMCNNILKGKKKTFVIASNCHPQTIDVCKTRADGFDLKVVTSDLKDIDYSSGDVCGVLVQYPGTEGEVLDYAEFVKNAHANGVKVVMATDLLALTVLKPPGEFGADIVVGSAQRFGVPMGYGGPHAAFLATSQEYKRMMPGRIIGISVDSSGKQALRMAMQTREQHIRRDKATSNICTAQALLANMAAMYAVYHGPAGLKSIAQRVHGLAGIFSLGLNKLGVAEVQELPFFDTVKIKCSDAHAIADAASKSEINLRVVDSTTITASFDETTTLDDVDKLFKVFASGKPVPFTAESLAPEVQNSIPSSLTRESPYLTHPIFNMYHTEHELLRYIHKLQSKDLSLCHSMIPLGSCTMKLNATTEMMPVTWPSFTDIHPFAPVEQAQGYQEMFENLGDLLCTITGFDSFSLQPNAGAAGEYAGLMVIRAYHMSRGDHHRNVCIIPVSAHGTNPASAAMCGMKIITVGTDAKGNINIEEVRKAAEANKDNLAALMVTYPSTHGVYEEGIDEICNIIHENGGQVYMDGANMNAQVGLTSPGFIGADVCHLNLHKTFCIPHGGGGPGMGPIGVKNHLAPFLPSHPVIPTGGIPQPEKTAPLGAISAAPWGSALILPISYTYIAMMGSGGLTDASKIAILNANYMAKRLEKHYPVLFRGVNGTVAHEFIIDLRGFKNTAGIEPEDVAKRLMDYGFHGPTMSWPVPGTLMIEPTESESKAELDRFCDALISIREEIAQIEKGNADVQNNVLKGAPHPPSLLMADTWKKPYSREYAAFPAPWLRSSKFWPTTGRVDNVYGDRKLVCTLLPEEEQVAAAVSA.

A mitochondrion-targeting transit peptide spans M1–S67. C98 carries the S-glutathionyl cysteine; transient modification. Residues C402 and C463 each carry the S-glutathionyl cysteine modification. K774 is subject to N6-(pyridoxal phosphate)lysine. C777, C943, and C1022 each carry S-glutathionyl cysteine; transient.

It belongs to the GcvP family. In terms of assembly, homodimer. The glycine cleavage system is composed of four proteins: P, T, L and H. It depends on pyridoxal 5'-phosphate as a cofactor. Post-translationally, glutathionylated at Cys-98, Cys-777, Cys-943 and Cys-1022 after S-nitrosoglutathione treatment. In terms of processing, S-nitrosylated at unknown positions by nitric oxide. In terms of tissue distribution, expressed in leaves. Detected in roots, stems, flowers and siliques.

The protein localises to the mitochondrion. It catalyses the reaction N(6)-[(R)-lipoyl]-L-lysyl-[glycine-cleavage complex H protein] + glycine + H(+) = N(6)-[(R)-S(8)-aminomethyldihydrolipoyl]-L-lysyl-[glycine-cleavage complex H protein] + CO2. Inhibited by harpin, S-nitrosoglutathione (GSNO), nitric oxide, N-ethylmaleimide and 5,5'-dithiobis-(2-nitrobenzoic acid). Functionally, the glycine decarboxylase (GDC) or glycine cleavage system catalyzes the degradation of glycine. The P protein binds the alpha-amino group of glycine through its pyridoxal phosphate cofactor; CO(2) is released and the remaining methylamine moiety is then transferred to the lipoamide cofactor of the H protein. This is Glycine dehydrogenase (decarboxylating) 1, mitochondrial (GLDP1) from Arabidopsis thaliana (Mouse-ear cress).